A 766-amino-acid polypeptide reads, in one-letter code: Serine/threonine-protein kinase tousled-like 1 (766 aa).

A disordered region spans residues 1-198; the sequence is MSVQSSSGSL…PSPTALAFGD (198 aa). Positions 20 to 33 are enriched in low complexity; it reads STSPTPGSAAAARS. The residue at position 38 (T38) is a Phosphothreonine. A compositionally biased stretch (basic and acidic residues) spans 43–64; that stretch reads RPREGAMDELHSLDPRRQELLE. 3 positions are modified to phosphoserine: S54, S77, and S80. Positions 68-85 are enriched in low complexity; the sequence is TGVATGSTGSTGSCSVGA. A compositionally biased stretch (polar residues) spans 87–103; the sequence is ASTNNESSNHSFGSLGS. Residues 105–121 are compositionally biased toward basic and acidic residues; the sequence is SDKESETPEKKQSESSR. Phosphoserine occurs at positions 134, 159, 174, and 176. Residues 170–192 show a composition bias toward low complexity; sequence SPQNSHSHSTPSSSVRPNSPSPT. Residues 229-280 adopt a coiled-coil conformation; sequence NQDLEKKEGRIDDLLRANCDLRRQIDDQQKLLEKYKERLNKCISMSKKLLIE. Positions 344–381 are disordered; it reads KLLGKRKPPTANNSQAPATNSEAKQRKTKAVNGAENDP. Over residues 353-365 the composition is skewed to polar residues; the sequence is TANNSQAPATNSE. A coiled-coil region spans residues 397-445; sequence HEQEEIFKLRLGHLKKEEAEIQAELERLERVRNLHIRELKRINNEDNSQ. A Protein kinase domain is found at 456 to 734; that stretch reads YLLLHLLGRG…VHQLANDPYL (279 aa). ATP-binding positions include 462–470 and K485; that span reads LGRGGFSEV. The active-site Proton acceptor is D586. A Phosphoserine modification is found at S743. A disordered region spans residues 745-766; that stretch reads GNLHMSGLTATPTPPSSSIITY.

Belongs to the protein kinase superfamily. Ser/Thr protein kinase family. Heterodimer with TLK2. Mg(2+) is required as a cofactor. In terms of tissue distribution, ubiquitously expressed in all tissues examined.

The protein localises to the nucleus. It catalyses the reaction L-seryl-[protein] + ATP = O-phospho-L-seryl-[protein] + ADP + H(+). The enzyme catalyses L-threonyl-[protein] + ATP = O-phospho-L-threonyl-[protein] + ADP + H(+). Its activity is regulated as follows. Cell-cycle regulated, maximal activity in S-phase. Inactivated by phosphorylation at Ser-743, potentially by CHEK1. Its function is as follows. Rapidly and transiently inhibited by phosphorylation following the generation of DNA double-stranded breaks during S-phase. This is cell cycle checkpoint and ATM-pathway dependent and appears to regulate processes involved in chromatin assembly. Isoform 3 protects the cells from the ionizing radiation by facilitating the repair of DSBs. In vitro, phosphorylates histone H3 at 'Ser-10'. This is Serine/threonine-protein kinase tousled-like 1 (Tlk1) from Mus musculus (Mouse).